The sequence spans 127 residues: Large ribosomal subunit protein bL12 (127 aa).

The protein belongs to the bacterial ribosomal protein bL12 family. As to quaternary structure, homodimer. Part of the ribosomal stalk of the 50S ribosomal subunit. Forms a multimeric L10(L12)X complex, where L10 forms an elongated spine to which 2 to 4 L12 dimers bind in a sequential fashion. Binds GTP-bound translation factors.

Functionally, forms part of the ribosomal stalk which helps the ribosome interact with GTP-bound translation factors. Is thus essential for accurate translation. This Pelobacter propionicus (strain DSM 2379 / NBRC 103807 / OttBd1) protein is Large ribosomal subunit protein bL12.